Reading from the N-terminus, the 443-residue chain is MSEMTPREIVSELDQHIIGQADAKRAVAIALRNRWRRMQLQEPLRHEVTPKNILMIGPTGVGKTEIARRLAKLANAPFIKVEATKFTEVGYVGKEVDSIIRDLTDSAMKLVRQTEIEKNRFRAEEMAEERVLDTLLPPAKDQWGQIEERDTNTNTRQIFRKKLREGQLDDREIEIDIAAPNIGVEIMAPPGMEEMTNQLQSMFQNLSSGQTKKRKMKIKDALKALIDDEAAKLINPEELKQKAIDAVEQNGIVFIDEIDKICKKGEYSGADVSREGVQRDLLPLVEGSTVNTKHGMVKTDHILFIASGAFQVARPSDLIPELQGRLPIRVELSALTAKDFERILTEPNASLTEQYQALMATEGVDIEFTESAVKKIAEAAFRVNEKTENIGARRLHTVMERLMDKISFDASEMSGQNVIIDGDYVTGALGDVVENEDLSHFIL.

Residues I18, 60–65 (GVGKTE), D256, E321, and R393 contribute to the ATP site.

The protein belongs to the ClpX chaperone family. HslU subfamily. In terms of assembly, a double ring-shaped homohexamer of HslV is capped on each side by a ring-shaped HslU homohexamer. The assembly of the HslU/HslV complex is dependent on binding of ATP.

It localises to the cytoplasm. Functionally, ATPase subunit of a proteasome-like degradation complex; this subunit has chaperone activity. The binding of ATP and its subsequent hydrolysis by HslU are essential for unfolding of protein substrates subsequently hydrolyzed by HslV. HslU recognizes the N-terminal part of its protein substrates and unfolds these before they are guided to HslV for hydrolysis. This Histophilus somni (strain 2336) (Haemophilus somnus) protein is ATP-dependent protease ATPase subunit HslU.